The primary structure comprises 129 residues: Flagellar assembly factor FliW 2 (129 aa).

The protein belongs to the FliW family. Interacts with translational regulator CsrA and flagellin(s).

The protein localises to the cytoplasm. Its function is as follows. Acts as an anti-CsrA protein, binds CsrA and prevents it from repressing translation of its target genes, one of which is flagellin. Binds to flagellin and participates in the assembly of the flagellum. The protein is Flagellar assembly factor FliW 2 of Helicobacter pylori (strain HPAG1).